The sequence spans 230 residues: MKKKKALPSLLYLVFIVLLPWGVSSSFNKCLELWIKNWWNTRQSETLLTDIQEKRILERFIELEELSLLDEMIKGKLKTHVQKPPTGIHKEIIQWVKINNEDHLHIILHFSTNIICLAILSGSFFLGKEELVILNSWVQEFFYNLNDSIKAFFILLVTDFFVGFHSTRGWELVIRWVYNDFGWAPNELIFTIFVCSFPVILDTCLKFWVFFCLNRLSPSLVVIYHSISEA.

4 helical membrane-spanning segments follow: residues 7 to 27 (LPSL…SSSF), 106 to 126 (IILH…SFFL), 145 to 165 (LNDS…VGFH), and 181 to 201 (FGWA…PVIL).

Belongs to the CemA family.

Its subcellular location is the plastid. It localises to the chloroplast inner membrane. The catalysed reaction is K(+)(in) + H(+)(out) = K(+)(out) + H(+)(in). Contributes to K(+)/H(+) antiport activity by supporting proton efflux to control proton extrusion and homeostasis in chloroplasts in a light-dependent manner to modulate photosynthesis. Prevents excessive induction of non-photochemical quenching (NPQ) under continuous-light conditions. Indirectly promotes efficient inorganic carbon uptake into chloroplasts. This Hordeum vulgare (Barley) protein is Potassium/proton antiporter CemA.